Consider the following 389-residue polypeptide: M protein, serotype 49 (389 aa).

The first 41 residues, Met-1–Ala-41, serve as a signal peptide directing secretion. Residues Glu-89 to Glu-99 form an A-1 repeat. Positions Glu-89 to Glu-135 are 2 X repeats, type A. Composition is skewed to basic and acidic residues over residues Lys-93–Gln-147, Glu-157–Lys-182, Glu-194–Ile-204, Leu-212–Lys-224, Glu-236–Ile-246, and Leu-254–Ala-270. 3 disordered regions span residues Lys-93–Lys-182, Glu-194–Lys-224, and Glu-236–Asp-271. The A-2 repeat unit spans residues Glu-125–Glu-135. C repeat units follow at residues Gln-154 to Leu-188, Gln-196 to Leu-230, and Gln-238 to Leu-272. 4 D repeats span residues Ala-305 to Glu-310, Ala-311 to Glu-316, Ala-319 to Glu-324, and Ala-326 to Asn-331. The segment at Ala-326–Thr-362 is disordered. A compositionally biased stretch (polar residues) spans Ala-342 to Thr-362. Positions Leu-356–Gly-360 match the LPXTG sorting signal motif. Thr-359 is modified (pentaglycyl murein peptidoglycan amidated threonine). Positions Gly-360 to Asn-389 are cleaved as a propeptide — removed by sortase.

The protein belongs to the M protein family. Homodimer.

The protein resides in the secreted. Its subcellular location is the cell wall. Functionally, this protein is one of the different antigenic serotypes of protein M. Protein M is closely associated with virulence of the bacterium and can render the organism resistant to phagocytosis. This chain is M protein, serotype 49 (emm49), found in Streptococcus pyogenes serotype M49.